The following is a 338-amino-acid chain: POU domain, class 4, transcription factor 3 (338 aa).

The POU-IV box signature appears at 56 to 65; that stretch reads RAEALAAVDI. Positions 179-256 constitute a POU-specific domain; it reads DVESDPRELE…VLQAWLEEAE (78 aa). The homeobox DNA-binding region spans 274–333; it reads RKRKRTSIAAPEKRSLEAYFAIQPRPSSEKIAAIAEKLDLKKNVVRVWFCNQRQKQKRMK.

The protein belongs to the POU transcription factor family. Class-4 subfamily. As to quaternary structure, interacts with ISL1. In terms of tissue distribution, brain.

It localises to the nucleus. The protein localises to the cytoplasm. In terms of biological role, acts as a transcriptional activator. Acts by binding to sequences related to the consensus octamer motif 5'-ATGCAAAT-3' in the regulatory regions of its target genes. Involved in the auditory system development, required for terminal differentiation of hair cells in the inner ear. This is POU domain, class 4, transcription factor 3 from Mus musculus (Mouse).